Here is a 590-residue protein sequence, read N- to C-terminus: Probable indole-3-acetic acid-amido synthetase GH3.1 (590 aa).

This sequence belongs to the IAA-amido conjugating enzyme family.

Catalyzes the synthesis of indole-3-acetic acid (IAA)-amino acid conjugates, providing a mechanism for the plant to cope with the presence of excess auxin. The protein is Probable indole-3-acetic acid-amido synthetase GH3.1 (GH3.1) of Arabidopsis thaliana (Mouse-ear cress).